Consider the following 271-residue polypeptide: Insulin-like growth factor-binding protein 5 (271 aa).

An N-terminal signal peptide occupies residues 1-19 (MVLTAVLLLLAACAGPAQG). In terms of domain architecture, IGFBP N-terminal spans 22–102 (SFVHCEPCDE…LHGRGVCLNE (81 aa)). 6 disulfide bridges follow: Cys26–Cys52, Cys29–Cys54, Cys37–Cys55, Cys44–Cys58, Cys66–Cys79, and Cys73–Cys99. The span at 109–121 (AKIERDSREHEEP) shows a compositional bias: basic and acidic residues. The tract at residues 109 to 129 (AKIERDSREHEEPTTSEMAEE) is disordered. Ser115 bears the Phosphoserine mark. The region spanning 188-262 (QGPCRRHMEA…MEYVDGDFQC (75 aa)) is the Thyroglobulin type-1 domain. Intrachain disulfides connect Cys191/Cys218, Cys229/Cys240, and Cys242/Cys262.

In terms of assembly, interacts with IGF1; this interaction enhances the growth stimulatory effects of IGF1 on fibroblasts. Interacts with CAV1; this interaction allows trafficking of IGFBP5 from the plasma membrane to the nucleus. Interacts with NCL; this interaction is necessary for IGFBP5 localization to the nucleus.

It is found in the secreted. The protein resides in the cytoplasm. It localises to the nucleus. Multifunctional protein that plays a critical role in regulating the availability of IGFs to their receptors and thereby regulates IGF-mediated cellular processes including proliferation, differentiation, and apoptosis in a cell-type specific manner. Increases the cell proliferation of osteoblasts, intestinal smooth muscle cells and neuroblastoma cells. Enhances adhesion and survival of epithelial cells but decreases adhesion of mesenchymal cells. Once secreted, acts as a major mediator of mTORC1-dependent feedback inhibition of IGF1 signaling. Also plays a role in the induction of extracellular matrix (ECM) production and deposition independently of its nuclear translocation and binding to IGFs. Acts itself as a growth factor that can act independently of IGFs to regulate bone formation. Acts as a ligand for the ROR1 receptor which triggers formation of ROR1/HER2 heterodimer to enhance CREB oncogenic signaling. This is Insulin-like growth factor-binding protein 5 (IGFBP5) from Sus scrofa (Pig).